Reading from the N-terminus, the 118-residue chain is Basic phospholipase A2 PA-10A (118 aa).

7 disulfide bridges follow: C11-C71, C27-C117, C29-C45, C44-C98, C51-C91, C60-C84, and C78-C89. Ca(2+)-binding residues include Y28, G30, and G32. The active site involves H48. Residue D49 participates in Ca(2+) binding. Residue D92 is part of the active site.

It belongs to the phospholipase A2 family. Group I subfamily. D49 sub-subfamily. Ca(2+) is required as a cofactor. Expressed by the venom gland.

It localises to the secreted. It carries out the reaction a 1,2-diacyl-sn-glycero-3-phosphocholine + H2O = a 1-acyl-sn-glycero-3-phosphocholine + a fatty acid + H(+). Functionally, PLA2 catalyzes the calcium-dependent hydrolysis of the 2-acyl groups in 3-sn-phosphoglycerides. This Pseudechis australis (Mulga snake) protein is Basic phospholipase A2 PA-10A.